A 210-amino-acid polypeptide reads, in one-letter code: Imidazole glycerol phosphate synthase subunit HisH (210 aa).

The Glutamine amidotransferase type-1 domain maps to 3–208; it reads PIAIIDYGMG…GELVRHAGNA (206 aa). Cys81 acts as the Nucleophile in catalysis. Active-site residues include His183 and Glu185.

In terms of assembly, heterodimer of HisH and HisF.

The protein resides in the cytoplasm. The catalysed reaction is 5-[(5-phospho-1-deoxy-D-ribulos-1-ylimino)methylamino]-1-(5-phospho-beta-D-ribosyl)imidazole-4-carboxamide + L-glutamine = D-erythro-1-(imidazol-4-yl)glycerol 3-phosphate + 5-amino-1-(5-phospho-beta-D-ribosyl)imidazole-4-carboxamide + L-glutamate + H(+). The enzyme catalyses L-glutamine + H2O = L-glutamate + NH4(+). It participates in amino-acid biosynthesis; L-histidine biosynthesis; L-histidine from 5-phospho-alpha-D-ribose 1-diphosphate: step 5/9. Functionally, IGPS catalyzes the conversion of PRFAR and glutamine to IGP, AICAR and glutamate. The HisH subunit catalyzes the hydrolysis of glutamine to glutamate and ammonia as part of the synthesis of IGP and AICAR. The resulting ammonia molecule is channeled to the active site of HisF. In Moorella thermoacetica (strain ATCC 39073 / JCM 9320), this protein is Imidazole glycerol phosphate synthase subunit HisH.